The sequence spans 86 residues: Myosin light chain alkali (86 aa).

Residues 11–46 form the EF-hand domain; it reads GCYEDFIECLKLYDKEENGTMMLAELQHALLALGES.

Myosin is a hexamer of 2 heavy chains and 4 light chains.

The polypeptide is Myosin light chain alkali (Mlc1) (Drosophila subobscura (Fruit fly)).